Here is an 879-residue protein sequence, read N- to C-terminus: Leucine--tRNA ligase (879 aa).

The 'HIGH' region motif lies at 45–55; it reads PYPSGALHMGH. Residues 637 to 641 carry the 'KMSKS' region motif; it reads KMSKS. Residue K640 participates in ATP binding.

This sequence belongs to the class-I aminoacyl-tRNA synthetase family.

The protein resides in the cytoplasm. It catalyses the reaction tRNA(Leu) + L-leucine + ATP = L-leucyl-tRNA(Leu) + AMP + diphosphate. This Xylella fastidiosa (strain M23) protein is Leucine--tRNA ligase.